We begin with the raw amino-acid sequence, 219 residues long: Poxin (219 aa).

The active-site Proton donor is His17. Residue Tyr138 is the Shared with catalytic histidine of dimeric partner of the active site. The active-site Proton acceptor; shared with catalytic histidine of dimeric partner is Lys142.

This sequence belongs to the poxin family. As to quaternary structure, homodimer.

It carries out the reaction 2',3'-cGAMP + H2O = Gp(2'-5')Ap(3') + H(+). Nuclease that is responsible for viral evasion of host cGAS-STING innate immunity. Cleaves 2',3'-cGAMP which is produced by host cGAS following recognition of cytosolic DNA and blocks the subsequent 2',3'-cGAMP-mediated activation of TMEM173/STING, which normally spreads to adjacent cells and activates the interferon and NF-kappa-B immune responses. The protein is Poxin (OPG188) of Homo sapiens (Human).